The sequence spans 400 residues: MAP kinase-activated protein kinase 2 (400 aa).

Positions 1 to 43 (MLSNSQGQSPPVPFPAPAPPPQPPTPALPHPPAQPPPPPPQQF) are disordered. A Phosphoserine modification is found at serine 9. The segment covering 10–42 (PPVPFPAPAPPPQPPTPALPHPPAQPPPPPPQQ) has biased composition (pro residues). Residue threonine 25 is modified to Phosphothreonine. Positions 64–325 (KVTSQVLGLG…ITEFMNHPWI (262 aa)) constitute a Protein kinase domain. ATP-binding positions include 70 to 78 (LGLGINGKV) and lysine 93. Residue 139-141 (ECL) participates in staurosporine binding. Aspartate 186 (proton acceptor) is an active-site residue. Residue threonine 222 is modified to Phosphothreonine; by MAPK14. Phosphoserine; by MAPK14 is present on serine 272. Serine 328 is subject to Phosphoserine; by autocatalysis. The autoinhibitory helix stretch occupies residues 328–364 (STKVPQTPLHTSRVLKEDKERWEDVKEEMTSALATMR). Position 334 is a phosphothreonine; by MAPK14 (threonine 334). A Glycyl lysine isopeptide (Lys-Gly) (interchain with G-Cter in SUMO) cross-link involves residue lysine 353. The Nuclear export signal (NES) motif lies at 356-365 (MTSALATMRV). A p38 MAPK-binding site region spans residues 366 to 390 (DYEQIKIKKIEDASNPLLLKRRKKA). Short sequence motifs (bipartite nuclear localization signal) lie at residues 371–374 (KIKK) and 385–389 (KRRKK).

It belongs to the protein kinase superfamily. CAMK Ser/Thr protein kinase family. In terms of assembly, heterodimer with p38-alpha/MAPK14; this heterodimer forms a stable complex: molecules are positioned 'face to face' so that the ATP-binding sites of both kinases are at the heterodimer interface. Interacts with PHC2. Interacts with HSF1. Sumoylation inhibits the protein kinase activity. Post-translationally, phosphorylated and activated by MAP kinase p38-alpha/MAPK14 at Thr-222, Ser-272 and Thr-334. As to expression, expressed in all tissues examined.

Its subcellular location is the cytoplasm. The protein localises to the nucleus. It carries out the reaction L-seryl-[protein] + ATP = O-phospho-L-seryl-[protein] + ADP + H(+). It catalyses the reaction L-threonyl-[protein] + ATP = O-phospho-L-threonyl-[protein] + ADP + H(+). With respect to regulation, activated following phosphorylation by p38-alpha/MAPK14 following various stresses. Inhibited following sumoylation. Specifically inhibited by pyrrolopyridine inhibitors. In terms of biological role, stress-activated serine/threonine-protein kinase involved in cytokine production, endocytosis, reorganization of the cytoskeleton, cell migration, cell cycle control, chromatin remodeling, DNA damage response and transcriptional regulation. Following stress, it is phosphorylated and activated by MAP kinase p38-alpha/MAPK14, leading to phosphorylation of substrates. Phosphorylates serine in the peptide sequence, Hyd-X-R-X(2)-S, where Hyd is a large hydrophobic residue. Phosphorylates ALOX5, CDC25B, CDC25C, CEP131, ELAVL1, HNRNPA0, HSP27/HSPB1, KRT18, KRT20, LIMK1, LSP1, PABPC1, PARN, PDE4A, RCSD1, RPS6KA3, TAB3 and TTP/ZFP36. Phosphorylates HSF1; leading to the interaction with HSP90 proteins and inhibiting HSF1 homotrimerization, DNA-binding and transactivation activities. Mediates phosphorylation of HSP27/HSPB1 in response to stress, leading to the dissociation of HSP27/HSPB1 from large small heat-shock protein (sHsps) oligomers and impairment of their chaperone activities and ability to protect against oxidative stress effectively. Involved in inflammatory response by regulating tumor necrosis factor (TNF) and IL6 production post-transcriptionally: acts by phosphorylating AU-rich elements (AREs)-binding proteins ELAVL1, HNRNPA0, PABPC1 and TTP/ZFP36, leading to the regulation of the stability and translation of TNF and IL6 mRNAs. Phosphorylation of TTP/ZFP36, a major post-transcriptional regulator of TNF, promotes its binding to 14-3-3 proteins and reduces its ARE mRNA affinity, leading to inhibition of dependent degradation of ARE-containing transcripts. Phosphorylates CEP131 in response to cellular stress induced by ultraviolet irradiation which promotes binding of CEP131 to 14-3-3 proteins and inhibits formation of novel centriolar satellites. Also involved in late G2/M checkpoint following DNA damage through a process of post-transcriptional mRNA stabilization: following DNA damage, relocalizes from nucleus to cytoplasm and phosphorylates HNRNPA0 and PARN, leading to stabilization of GADD45A mRNA. Involved in toll-like receptor signaling pathway (TLR) in dendritic cells: required for acute TLR-induced macropinocytosis by phosphorylating and activating RPS6KA3. This chain is MAP kinase-activated protein kinase 2 (MAPKAPK2), found in Homo sapiens (Human).